Consider the following 186-residue polypeptide: Acireductone dioxygenase (186 aa).

Histidine 103, histidine 105, glutamate 109, and histidine 147 together coordinate Fe(2+). Ni(2+)-binding residues include histidine 103, histidine 105, glutamate 109, and histidine 147.

This sequence belongs to the acireductone dioxygenase (ARD) family. Monomer. It depends on Fe(2+) as a cofactor. The cofactor is Ni(2+).

The enzyme catalyses 1,2-dihydroxy-5-(methylsulfanyl)pent-1-en-3-one + O2 = 3-(methylsulfanyl)propanoate + CO + formate + 2 H(+). It carries out the reaction 1,2-dihydroxy-5-(methylsulfanyl)pent-1-en-3-one + O2 = 4-methylsulfanyl-2-oxobutanoate + formate + 2 H(+). It participates in amino-acid biosynthesis; L-methionine biosynthesis via salvage pathway; L-methionine from S-methyl-5-thio-alpha-D-ribose 1-phosphate: step 5/6. Catalyzes 2 different reactions between oxygen and the acireductone 1,2-dihydroxy-3-keto-5-methylthiopentene (DHK-MTPene) depending upon the metal bound in the active site. Fe-containing acireductone dioxygenase (Fe-ARD) produces formate and 2-keto-4-methylthiobutyrate (KMTB), the alpha-ketoacid precursor of methionine in the methionine recycle pathway. Ni-containing acireductone dioxygenase (Ni-ARD) produces methylthiopropionate, carbon monoxide and formate, and does not lie on the methionine recycle pathway. The sequence is that of Acireductone dioxygenase from Parasynechococcus marenigrum (strain WH8102).